The sequence spans 103 residues: MTVLERLAATVEARKGADPDSSWTAKLFAKGPEKCAEKFGEEAVEAIIEAVRGDRAKLASEAADVLYHLLVMLAARDVTLAEVMAVLEAREGTSGIAEKAGRG.

This sequence belongs to the PRA-PH family.

The protein resides in the cytoplasm. It catalyses the reaction 1-(5-phospho-beta-D-ribosyl)-ATP + H2O = 1-(5-phospho-beta-D-ribosyl)-5'-AMP + diphosphate + H(+). It functions in the pathway amino-acid biosynthesis; L-histidine biosynthesis; L-histidine from 5-phospho-alpha-D-ribose 1-diphosphate: step 2/9. In Cereibacter sphaeroides (strain ATCC 17023 / DSM 158 / JCM 6121 / CCUG 31486 / LMG 2827 / NBRC 12203 / NCIMB 8253 / ATH 2.4.1.) (Rhodobacter sphaeroides), this protein is Phosphoribosyl-ATP pyrophosphatase (hisE).